A 64-amino-acid polypeptide reads, in one-letter code: Insect toxin OsI1 (64 aa).

The 61-residue stretch at 1-61 (DGYPKQKDGC…MWKYETNTCG (61 aa)) folds into the LCN-type CS-alpha/beta domain. Intrachain disulfides connect Cys10/Cys60, Cys14/Cys35, Cys21/Cys42, and Cys25/Cys44. A Glycine amide modification is found at Gly61.

It belongs to the long (4 C-C) scorpion toxin superfamily. Sodium channel inhibitor family. Beta subfamily. In terms of tissue distribution, expressed by the venom gland.

Its subcellular location is the secreted. Depressant insect beta-toxins cause a transient contraction paralysis followed by a slow flaccid paralysis. They bind voltage-independently at site-4 of sodium channels (Nav) and shift the voltage of activation toward more negative potentials thereby affecting sodium channel activation and promoting spontaneous and repetitive firing. This toxin is active only on insects. The chain is Insect toxin OsI1 from Orthochirus scrobiculosus (Central Asian scorpion).